A 180-amino-acid polypeptide reads, in one-letter code: Large ribosomal subunit protein uL5 (180 aa).

This sequence belongs to the universal ribosomal protein uL5 family. Part of the 50S ribosomal subunit; part of the 5S rRNA/L5/L18/L25 subcomplex. Contacts the 5S rRNA and the P site tRNA. Forms a bridge to the 30S subunit in the 70S ribosome.

This is one of the proteins that bind and probably mediate the attachment of the 5S RNA into the large ribosomal subunit, where it forms part of the central protuberance. In the 70S ribosome it contacts protein S13 of the 30S subunit (bridge B1b), connecting the 2 subunits; this bridge is implicated in subunit movement. Contacts the P site tRNA; the 5S rRNA and some of its associated proteins might help stabilize positioning of ribosome-bound tRNAs. The polypeptide is Large ribosomal subunit protein uL5 (Limosilactobacillus fermentum (strain NBRC 3956 / LMG 18251) (Lactobacillus fermentum)).